The sequence spans 407 residues: FMN-dependent alpha-hydroxy acid dehydrogenase PB1A11.03 (407 aa).

The FMN hydroxy acid dehydrogenase domain maps to 28–406 (QRPQITVDGR…DLNRDVLYKE (379 aa)). Residue tyrosine 54 coordinates a 2-oxocarboxylate. The FMN site is built by serine 136 and glutamine 158. Tyrosine 160 lines the a 2-oxocarboxylate pocket. Threonine 188 contacts FMN. Arginine 197 contacts a 2-oxocarboxylate. Lysine 277 contributes to the FMN binding site. Histidine 301 functions as the Proton acceptor in the catalytic mechanism. Arginine 304 contacts a 2-oxocarboxylate. Residues 332–336 (DSGVR) and 355–356 (GR) each bind FMN.

It belongs to the FMN-dependent alpha-hydroxy acid dehydrogenase family. FMN is required as a cofactor.

The protein resides in the cytoplasm. It is found in the nucleus. This Schizosaccharomyces pombe (strain 972 / ATCC 24843) (Fission yeast) protein is FMN-dependent alpha-hydroxy acid dehydrogenase PB1A11.03.